The following is a 337-amino-acid chain: MDPRSEVILRQQDYLKGRVLLINAPNDALVSQLPTEIDASVWTWNYADYQGFLNAGATAHFSVEFPLQEFDQAIIFVPKSKELLNYILHVVMSHLKIDQSVFLVGEKKGGVERAAKQLQSFGKILKLDSARHCQLWHLKIEKTEKIKPLESWLKTYTVQVNEQELTICALPGVFSQTHLDVGTAVLLPYLNQVKSGRIADFGCGAGIISCYLAKANSSNIIHALDIDAFALQSTEMTFSRNGIGSDQLRLQPVTGIADAPTELDAIVSNPPFHQGIHTNYDASEGLCQNAKKHLKASGELWIVANRFLNYPILIEKHFGQCEIKTDLQGFKVLYACA.

It belongs to the methyltransferase superfamily. RsmC family. As to quaternary structure, monomer.

Its subcellular location is the cytoplasm. The enzyme catalyses guanosine(1207) in 16S rRNA + S-adenosyl-L-methionine = N(2)-methylguanosine(1207) in 16S rRNA + S-adenosyl-L-homocysteine + H(+). In terms of biological role, specifically methylates the guanine in position 1207 of 16S rRNA in the 30S particle. This is Ribosomal RNA small subunit methyltransferase C from Acinetobacter baumannii (strain ATCC 17978 / DSM 105126 / CIP 53.77 / LMG 1025 / NCDC KC755 / 5377).